Consider the following 283-residue polypeptide: Methyltransferase cpsF (283 aa).

The protein belongs to the methyltransferase superfamily. LaeA methyltransferase family.

It catalyses the reaction campesine A + S-adenosyl-L-methionine = campesine B + S-adenosyl-L-homocysteine + H(+). It participates in alkaloid biosynthesis. Its function is as follows. Methyltransferase; part of the gene cluster that mediates the biosynthesis of campesine G, a dimeric indole piperazine alkaloid that shows good insecticidal activity Galleria mellonella. Within the pathway, cpsF methylates campesine A at N13 of piperazine ring to produce campesine B. The non-canonical non-ribosomal peptide synthetase cpsA catalyzes the first steps of the pathway by producing L-tryptophanal and L-valinal from their respective amino-acids. These products condensate spontaneously to form trypyl-valyl pyrazine also known as didehydrocampesine A. The NmrA-like family domain-containing oxidoreductase cpsB is the next enzyme in cps pathway and reduces the unstable didehydrocampesine A to campesine A. The methyltransferase cpsF and the acetyltransferase cpsE both recognize N13 of piperazine ring to carry out methylation and acetylation of campesine A to produce campesine C and B, respectively. The cytochrome P450 monooxygenase cpsD then acts as a dimerase that catalyzes oxidative heterocoupling between campesine B and C to produce heterodimers with unexpected 6/5/6/6/6/6/5/6 eight-ring scaffold called campesine D. Finally,the cytochrome P450 monooxygenase cpsC is a regioselective dehydrogenase that catalyzes dehydrogenation reaction towards C2-N1 to produce campesine G. The protein is Methyltransferase cpsF of Aspergillus campestris (strain IBT 28561).